The primary structure comprises 273 residues: Glutamate 5-kinase (273 aa).

Lys-15 contacts ATP. Substrate is bound by residues Ser-55, Asp-142, and Asn-158. Residues 178–179 and 220–226 contribute to the ATP site; these read SD and TGGMLSK.

Belongs to the glutamate 5-kinase family.

The protein resides in the cytoplasm. The enzyme catalyses L-glutamate + ATP = L-glutamyl 5-phosphate + ADP. The protein operates within amino-acid biosynthesis; L-proline biosynthesis; L-glutamate 5-semialdehyde from L-glutamate: step 1/2. Its function is as follows. Catalyzes the transfer of a phosphate group to glutamate to form L-glutamate 5-phosphate. This is Glutamate 5-kinase from Streptococcus pyogenes serotype M18 (strain MGAS8232).